The chain runs to 314 residues: Curved DNA-binding protein (314 aa).

One can recognise a J domain in the interval 5 to 69; the sequence is DYYKILDVEP…EKRAEYDELR (65 aa). Positions 73–92 are disordered; that stretch reads RQGRPFQTPPGWQSRAGAGA.

The protein resides in the cytoplasm. Its subcellular location is the nucleoid. Functionally, DNA-binding protein that preferentially recognizes a curved DNA sequence. It is probably a functional analog of DnaJ; displays overlapping activities with DnaJ, but functions under different conditions, probably acting as a molecular chaperone in an adaptive response to environmental stresses other than heat shock. Lacks autonomous chaperone activity; binds native substrates and targets them for recognition by DnaK. Its activity is inhibited by the binding of CbpM. This chain is Curved DNA-binding protein, found in Pseudomonas syringae pv. tomato (strain ATCC BAA-871 / DC3000).